We begin with the raw amino-acid sequence, 368 residues long: Peptide chain release factor 2 (368 aa).

At Gln-249 the chain carries N5-methylglutamine.

This sequence belongs to the prokaryotic/mitochondrial release factor family. In terms of processing, methylated by PrmC. Methylation increases the termination efficiency of RF2.

The protein localises to the cytoplasm. Functionally, peptide chain release factor 2 directs the termination of translation in response to the peptide chain termination codons UGA and UAA. The polypeptide is Peptide chain release factor 2 (Rhodococcus jostii (strain RHA1)).